A 487-amino-acid chain; its full sequence is Glycogen synthase 1 (487 aa).

Residue K15 participates in ADP-alpha-D-glucose binding.

Belongs to the glycosyltransferase 1 family. Bacterial/plant glycogen synthase subfamily.

The enzyme catalyses [(1-&gt;4)-alpha-D-glucosyl](n) + ADP-alpha-D-glucose = [(1-&gt;4)-alpha-D-glucosyl](n+1) + ADP + H(+). It participates in glycan biosynthesis; glycogen biosynthesis. Synthesizes alpha-1,4-glucan chains using ADP-glucose. The sequence is that of Glycogen synthase 1 from Nitrosococcus oceani (strain ATCC 19707 / BCRC 17464 / JCM 30415 / NCIMB 11848 / C-107).